A 1162-amino-acid chain; its full sequence is ATP-dependent helicase/deoxyribonuclease subunit B (1162 aa).

In terms of domain architecture, UvrD-like helicase ATP-binding spans 1-275; sequence MELNAYIGRA…QFFKQQYRFN (275 aa). 8–15 serves as a coordination point for ATP; the sequence is GRAGTGKS. The region spanning 269–583 is the UvrD-like helicase C-terminal domain; that stretch reads KQQYRFNNKD…SIGTMDLAKV (315 aa). 4 residues coordinate [4Fe-4S] cluster: Cys784, Cys1117, Cys1120, and Cys1126.

The protein belongs to the helicase family. AddB/RexB type 1 subfamily. Heterodimer of AddA and AddB. It depends on Mg(2+) as a cofactor. Requires [4Fe-4S] cluster as cofactor.

The heterodimer acts as both an ATP-dependent DNA helicase and an ATP-dependent, dual-direction single-stranded exonuclease. Recognizes the chi site generating a DNA molecule suitable for the initiation of homologous recombination. The AddB subunit has 5' -&gt; 3' nuclease activity but not helicase activity. The protein is ATP-dependent helicase/deoxyribonuclease subunit B of Staphylococcus haemolyticus (strain JCSC1435).